Consider the following 612-residue polypeptide: Chaperone protein DnaK (612 aa).

Residue Thr174 is modified to Phosphothreonine; by autocatalysis. Residues Gly579 to Lys612 form a disordered region. Residues Ala581 to Asp597 show a composition bias toward gly residues. Over residues Ala603–Lys612 the composition is skewed to basic and acidic residues.

This sequence belongs to the heat shock protein 70 family.

Acts as a chaperone. The chain is Chaperone protein DnaK from Symbiobacterium thermophilum (strain DSM 24528 / JCM 14929 / IAM 14863 / T).